Reading from the N-terminus, the 421-residue chain is 4-hydroxy-3-methylbut-2-en-1-yl diphosphate synthase (flavodoxin) (421 aa).

Residues cysteine 298, cysteine 301, cysteine 344, and glutamate 351 each coordinate [4Fe-4S] cluster.

The protein belongs to the IspG family. [4Fe-4S] cluster is required as a cofactor.

The catalysed reaction is (2E)-4-hydroxy-3-methylbut-2-enyl diphosphate + oxidized [flavodoxin] + H2O + 2 H(+) = 2-C-methyl-D-erythritol 2,4-cyclic diphosphate + reduced [flavodoxin]. It functions in the pathway isoprenoid biosynthesis; isopentenyl diphosphate biosynthesis via DXP pathway; isopentenyl diphosphate from 1-deoxy-D-xylulose 5-phosphate: step 5/6. Functionally, converts 2C-methyl-D-erythritol 2,4-cyclodiphosphate (ME-2,4cPP) into 1-hydroxy-2-methyl-2-(E)-butenyl 4-diphosphate. The protein is 4-hydroxy-3-methylbut-2-en-1-yl diphosphate synthase (flavodoxin) of Neisseria meningitidis serogroup C / serotype 2a (strain ATCC 700532 / DSM 15464 / FAM18).